Here is a 205-residue protein sequence, read N- to C-terminus: Outer-membrane lipoprotein LolB (205 aa).

An N-terminal signal peptide occupies residues 1 to 17; it reads MFLRHFIVFSFIALLAG. Cys-18 carries N-palmitoyl cysteine lipidation. Residue Cys-18 is the site of S-diacylglycerol cysteine attachment.

The protein belongs to the LolB family. As to quaternary structure, monomer.

Its subcellular location is the cell outer membrane. Its function is as follows. Plays a critical role in the incorporation of lipoproteins in the outer membrane after they are released by the LolA protein. The sequence is that of Outer-membrane lipoprotein LolB from Pseudomonas fluorescens (strain ATCC BAA-477 / NRRL B-23932 / Pf-5).